Here is a 263-residue protein sequence, read N- to C-terminus: uncharacterized protein (263 aa).

The protein belongs to the AtsA family.

Its subcellular location is the plastid. It is found in the chloroplast. This is an uncharacterized protein from Porphyra purpurea (Red seaweed).